Consider the following 358-residue polypeptide: Pre-mRNA-splicing factor spp2 (358 aa).

2 disordered regions span residues 1 to 250 (MTDQ…RAVP) and 298 to 358 (AWNQ…RGDR). Basic residues predominate over residues 24-40 (KTKKPSRPTHTRRHHAR). 2 stretches are compositionally biased toward basic and acidic residues: residues 80-137 (LENR…DASR) and 145-160 (RSRD…KDLQ). Residues 174 to 185 (NPKSTTTATSSF) are compositionally biased toward polar residues. Composition is skewed to basic and acidic residues over residues 233–246 (SSHD…HSDY) and 309–358 (GDSR…RGDR).

The protein belongs to the SPP2 family. Associated with the spliceosome.

It is found in the nucleus. Involved in spliceosome maturation and the first step of pre-mRNA splicing. This Neurospora crassa (strain ATCC 24698 / 74-OR23-1A / CBS 708.71 / DSM 1257 / FGSC 987) protein is Pre-mRNA-splicing factor spp2 (msp-40).